A 306-amino-acid chain; its full sequence is Acetyl-coenzyme A carboxylase carboxyl transferase subunit beta (306 aa).

Residues 25–294 (LWIKDPTSGE…VVTPSPPSPT (270 aa)) enclose the CoA carboxyltransferase N-terminal domain. A disordered region spans residues 284–306 (AVVTPSPPSPTDSQTSLSKTKAA).

It belongs to the AccD/PCCB family. As to quaternary structure, acetyl-CoA carboxylase is a heterohexamer composed of biotin carboxyl carrier protein (AccB), biotin carboxylase (AccC) and two subunits each of ACCase subunit alpha (AccA) and ACCase subunit beta (AccD).

It is found in the cytoplasm. It catalyses the reaction N(6)-carboxybiotinyl-L-lysyl-[protein] + acetyl-CoA = N(6)-biotinyl-L-lysyl-[protein] + malonyl-CoA. Its pathway is lipid metabolism; malonyl-CoA biosynthesis; malonyl-CoA from acetyl-CoA: step 1/1. Its function is as follows. Component of the acetyl coenzyme A carboxylase (ACC) complex. Biotin carboxylase (BC) catalyzes the carboxylation of biotin on its carrier protein (BCCP) and then the CO(2) group is transferred by the transcarboxylase to acetyl-CoA to form malonyl-CoA. The chain is Acetyl-coenzyme A carboxylase carboxyl transferase subunit beta from Bartonella tribocorum (strain CIP 105476 / IBS 506).